A 383-amino-acid polypeptide reads, in one-letter code: Creatine kinase, testis isozyme (383 aa).

The Phosphagen kinase N-terminal domain occupies 14–100 (KRLSPEEEFP…LDPIIEDRHG (87 aa)). Over residues 99–112 (HGGYKPTDKHKTDL) the composition is skewed to basic and acidic residues. The segment at 99-119 (HGGYKPTDKHKTDLNPDNLKG) is disordered. One can recognise a Phosphagen kinase C-terminal domain in the interval 127–369 (YVISSRVRTG…KLLVEMEKKL (243 aa)). Residues 130–134 (SSRVR), H193, R238, R294, 322–327 (RGTGGV), and D337 each bind ATP.

The protein belongs to the ATP:guanido phosphotransferase family. As to expression, exists in many tissues, but preferentially in testis.

The catalysed reaction is creatine + ATP = N-phosphocreatine + ADP + H(+). Its function is as follows. Reversibly catalyzes the transfer of phosphate between ATP and various phosphogens (e.g. creatine phosphate). Creatine kinase isoenzymes play a central role in energy transduction in tissues with large, fluctuating energy demands, such as skeletal muscle, heart, brain and spermatozoa. This Oncorhynchus mykiss (Rainbow trout) protein is Creatine kinase, testis isozyme (tck1).